A 386-amino-acid chain; its full sequence is Patatin-15 (386 aa).

A signal peptide spans 1-23 (MATTKSFLILFFMILATTSSTCA). The region spanning 32-229 (LSIDGGGIKG…TVGDPALLSL (198 aa)) is the PNPLA domain. A GXGXXG motif is present at residues 36–41 (GGGIKG). A GXSXG motif is present at residues 75–79 (GTSTG). The active-site Nucleophile is the S77. N115 carries N-linked (GlcNAc...) asparagine glycosylation. D215 (proton acceptor) is an active-site residue. Residues 215-217 (DGG) carry the DGA/G motif. Residues 321 to 384 (ENALTGTTTE…DRKKLRANKA (64 aa)) adopt a coiled-coil conformation.

This sequence belongs to the patatin family. Tuber.

It localises to the vacuole. Functionally, probable lipolytic acyl hydrolase (LAH), an activity which is thought to be involved in the response of tubers to pathogens. The protein is Patatin-15 of Solanum tuberosum (Potato).